We begin with the raw amino-acid sequence, 538 residues long: Translation initiation factor IF-3, chloroplastic (538 aa).

Residues 1–140 (MVRSSCLQCD…VTQRKEIAVF (140 aa)) constitute a chloroplast transit peptide. The interval 141 to 290 (SASGQAAEPE…EEVEEEQEVL (150 aa)) is head. Disordered stretches follow at residues 146-165 (AAEP…PAAK) and 188-210 (RTDS…NWPS). The segment at 291-474 (SWADRRRALA…LILNLAPAGE (184 aa)) is IF-3 like. The tract at residues 484 to 538 (AERDRKAAAEEEGEGDDLDFVDENEDEDVEGEGEEEEAEELEEETAEGTEVPTRS) is disordered. Over residues 493–530 (EEEGEGDDLDFVDENEDEDVEGEGEEEEAEELEEETAE) the composition is skewed to acidic residues.

Belongs to the IF-3 family. As to quaternary structure, monomer. The N-terminus is blocked.

The protein resides in the plastid. It localises to the chloroplast. Involved in chloroplast protein synthesis. It enhances the poly(A,U,G)-dependent binding of the initiator tRNA to chloroplast 30S subunits. This chain is Translation initiation factor IF-3, chloroplastic, found in Euglena gracilis.